We begin with the raw amino-acid sequence, 422 residues long: UDP-N-acetylglucosamine 1-carboxyvinyltransferase (422 aa).

22 to 23 provides a ligand contact to phosphoenolpyruvate; the sequence is KN. Position 94 (R94) interacts with UDP-N-acetyl-alpha-D-glucosamine. C118 serves as the catalytic Proton donor. C118 carries the 2-(S-cysteinyl)pyruvic acid O-phosphothioketal modification. UDP-N-acetyl-alpha-D-glucosamine contacts are provided by residues 123–127, D309, and I331; that span reads RPVDL.

Belongs to the EPSP synthase family. MurA subfamily.

It is found in the cytoplasm. It catalyses the reaction phosphoenolpyruvate + UDP-N-acetyl-alpha-D-glucosamine = UDP-N-acetyl-3-O-(1-carboxyvinyl)-alpha-D-glucosamine + phosphate. It functions in the pathway cell wall biogenesis; peptidoglycan biosynthesis. Its function is as follows. Cell wall formation. Adds enolpyruvyl to UDP-N-acetylglucosamine. This Cereibacter sphaeroides (strain ATCC 17025 / ATH 2.4.3) (Rhodobacter sphaeroides) protein is UDP-N-acetylglucosamine 1-carboxyvinyltransferase.